The chain runs to 1312 residues: MADTDHYITAGIIYYCQEKYHQHVQNLAREGLKKYSNDPVLQFFKIYGMLMEDRVQDAIRRLEPIKDDPTVVLCSTMALIYAHKRSERVDREAVADLENKLKETRKSAGPKALYYAGMFLWLMGRTDKAREYIDRMLKISNRSREGLVLRGWLDLSSEKESTVNKSIRYFEEGIQDNKDIFALIGKAQYFMAHQNYSGALDVINQIIVNYPPFLPALTLKMRLFLAQQDWDQTLETAQRILLKDGANIDAFQILTIHSVTREGSTEKALNYLRELINALDAAEPRNPMLHLHKILPISSLCGRNQPILKQVSVVIGRIFQTAPHAEVATALANNFILQGNVTEAAGWYATAMKLDGNHLEGLTGVIQCQILQGQLEEAEQQLDFLHEIQESIGGTKELCYIQALLASRQGKEEQIITELLKKAVELHYAAVRGLPLGVEYFEKLNPTFLINIVQEYLVLCPKQPKAPGEPLSPLLKQALSILTPVVSVAPALTEPLYYTAQIKYLAGNLEGAQGSLQRCIEVDTACADFHLLMAQIHYAQGKFAECSVSLETGVSHNFKVRERPLYHLIRARVLRKTGELQEAIKTLKMTMSLQEMKRGALKKSTWGSLNSSDKVSIYLELAELLRLNGEQHEATKIIQDAINEFGGTPEEIRIVVANADMAVAKGDVEMALNVLRDIAPNQPYYTEVKQKMAQIYLNNRKDKKLYIGCYRELCEQQPGPHTSVLLGDALMNIQEPEKALEVYNEALHKNPQDASLANRIGQALIKTHQYKKAVNYYEAAQKISGQDFLCCDLAELLIKLKQYSKAEAVLKQALAHEPVSDLTSMVTDAKCLGLLGTTYQNYKKEESADILNKALELQQRILKRVPMEQPEMAPAQKQATSEICVQLAEHYVDQRNYEQAANYYKEAMVYSQDSKVKLQLSRLYLMMGDLDSCENHCSALLENHSFKEEAAMMMADVMFRKQDYTKSIELFDQILEENPDNFAVLSKLIDLLRRSGNLSKAPMFFEKALANSSRTTLEPGYNYCKGLYCWYLGQPNDGLKYFNKARKDSEWGQNAISNMVQICLNPDNEIVGGEVFEAPDEADGLLGEKRESEMLGVRTAEKLLKEFHPRTLNGRNQLALLQNHCLMATKDKANVETALSAFTEMATSEKDNVCAILAVAQAYMILRQTPRARNQLKRLSKVPWSLADAEDLEKSWLLLADVYIKLGKYDIATELLKRCLLYNKSCYKAYEYLGFIMENEQSYKDAAANYRLAWDYSNQSNPAVGFRLAFNYLKDKKYVDAIDICHKVLKAHPTYPKIEREILAKAQTSLKP.

TPR repeat units follow at residues 4–38, 110–143, 147–180, 182–213, 214–247, and 325–358; these read TDHY…YSND, PKAL…SNRS, LVLR…NKDI, ALIG…YPPF, LPAL…DGAN, and AEVA…DGNH. The stretch at 365–392 forms a coiled coil; that stretch reads VIQCQILQGQLEEAEQQLDFLHEIQESI. 16 TPR repeats span residues 493–526, 528–560, 564–597, 615–648, 720–753, 755–787, 789–820, 829–861, 881–914, 916–947, 948–981, 983–1015, 1019–1052, 1193–1226, 1228–1260, and 1262–1295; these read TEPL…DTAC, DFHL…NFKV, PLYH…QEMK, VSIY…FGGT, PHTS…NPQD, SLAN…SGQD, LCCD…EPVS, AKCL…QQRI, SEIC…SQDS, VKLQ…HSFK, EEAA…NPDN, AVLS…SSRT, PGYN…SEWG, EKSW…NKSC, KAYE…SNQS, and PAVG…HPTY.

Belongs to the TTC21 family. In terms of assembly, component of the IFT complex A (IFT-A).

Its function is as follows. Component of the IFT complex A (IFT-A), a complex required for retrograde ciliary transport and entry into cilia of G protein-coupled receptors (GPCRs). Negatively modulates the SHH signal transduction. The protein is Tetratricopeptide repeat protein 21B (ttc21b) of Xenopus laevis (African clawed frog).